The following is a 484-amino-acid chain: tRNA sulfurtransferase (484 aa).

One can recognise a THUMP domain in the interval 63 to 167 (ERLVEALKCI…NKDLFIVTQR (105 aa)). ATP contacts are provided by residues 185 to 186 (LM), K267, G289, and Q298. C346 and C458 are disulfide-bonded. One can recognise a Rhodanese domain in the interval 406–484 (IPENAVVVDI…GFKNVKVYRP (79 aa)). C458 serves as the catalytic Cysteine persulfide intermediate.

This sequence belongs to the ThiI family.

The protein resides in the cytoplasm. It carries out the reaction [ThiI sulfur-carrier protein]-S-sulfanyl-L-cysteine + a uridine in tRNA + 2 reduced [2Fe-2S]-[ferredoxin] + ATP + H(+) = [ThiI sulfur-carrier protein]-L-cysteine + a 4-thiouridine in tRNA + 2 oxidized [2Fe-2S]-[ferredoxin] + AMP + diphosphate. The enzyme catalyses [ThiS sulfur-carrier protein]-C-terminal Gly-Gly-AMP + S-sulfanyl-L-cysteinyl-[cysteine desulfurase] + AH2 = [ThiS sulfur-carrier protein]-C-terminal-Gly-aminoethanethioate + L-cysteinyl-[cysteine desulfurase] + A + AMP + 2 H(+). It functions in the pathway cofactor biosynthesis; thiamine diphosphate biosynthesis. Its function is as follows. Catalyzes the ATP-dependent transfer of a sulfur to tRNA to produce 4-thiouridine in position 8 of tRNAs, which functions as a near-UV photosensor. Also catalyzes the transfer of sulfur to the sulfur carrier protein ThiS, forming ThiS-thiocarboxylate. This is a step in the synthesis of thiazole, in the thiamine biosynthesis pathway. The sulfur is donated as persulfide by IscS. The sequence is that of tRNA sulfurtransferase from Colwellia psychrerythraea (strain 34H / ATCC BAA-681) (Vibrio psychroerythus).